Reading from the N-terminus, the 455-residue chain is Exodeoxyribonuclease 7 large subunit (455 aa).

Belongs to the XseA family. As to quaternary structure, heterooligomer composed of large and small subunits.

It is found in the cytoplasm. The catalysed reaction is Exonucleolytic cleavage in either 5'- to 3'- or 3'- to 5'-direction to yield nucleoside 5'-phosphates.. Functionally, bidirectionally degrades single-stranded DNA into large acid-insoluble oligonucleotides, which are then degraded further into small acid-soluble oligonucleotides. This Koribacter versatilis (strain Ellin345) protein is Exodeoxyribonuclease 7 large subunit.